The chain runs to 689 residues: tRNA wybutosine-synthesizing protein 4 (689 aa).

Residues 1 to 33 (MTSTSKLDANQLARQRKKLEKDRRKKVYDDQQV) form a disordered region. The span at 14-26 (RQRKKLEKDRRKK) shows a compositional bias: basic residues. S-adenosyl-L-methionine contacts are provided by residues Arg-84, Gly-111, Asp-137, 183 to 184 (DL), and Glu-215.

The protein belongs to the methyltransferase superfamily. LCMT family.

The catalysed reaction is 7-[(3S)-3-amino-3-carboxypropyl]wyosine(37) in tRNA(Phe) + S-adenosyl-L-methionine = 7-[(3S)-(3-amino-3-methoxycarbonyl)propyl]wyosine(37) in tRNA(Phe) + S-adenosyl-L-homocysteine. The enzyme catalyses 7-[(3S)-(3-amino-3-methoxycarbonyl)propyl]wyosine(37) in tRNA(Phe) + S-adenosyl-L-methionine + CO2 = wybutosine(37) in tRNA(Phe) + S-adenosyl-L-homocysteine + 2 H(+). It participates in tRNA modification; wybutosine-tRNA(Phe) biosynthesis. Functionally, probable S-adenosyl-L-methionine-dependent methyltransferase that acts as a component of the wybutosine biosynthesis pathway. Wybutosine is a hyper modified guanosine with a tricyclic base found at the 3'-position adjacent to the anticodon of eukaryotic phenylalanine tRNA. May methylate the carboxyl group of leucine residues to form alpha-leucine ester residues. In Candida albicans (strain SC5314 / ATCC MYA-2876) (Yeast), this protein is tRNA wybutosine-synthesizing protein 4 (PPM2).